Consider the following 201-residue polypeptide: Dimethylsulfoniopropionate lyase DddQ (201 aa).

H130, E134, Y136, and H169 together coordinate a divalent metal cation.

The protein belongs to the non-heme iron-dependent dioxygenase family. As to quaternary structure, homodimer. It depends on a divalent metal cation as a cofactor.

The enzyme catalyses S,S-dimethyl-beta-propiothetin = acrylate + dimethyl sulfide + H(+). Functionally, may act as a dimethylsulfoniopropionate (DMSP) in vitro, releasing dimethyl sulfide (DMS). DMS is the principal form by which sulfur is transported from oceans to the atmosphere. The real activity of the protein is however subject to debate and it is unclear whether it constitutes a real dimethylsulfoniopropionate lyase in vivo. The protein is Dimethylsulfoniopropionate lyase DddQ of Ruegeria pomeroyi (strain ATCC 700808 / DSM 15171 / DSS-3) (Silicibacter pomeroyi).